The sequence spans 276 residues: UPF0276 protein AM1_3026 (276 aa).

This sequence belongs to the UPF0276 family.

This is UPF0276 protein AM1_3026 from Acaryochloris marina (strain MBIC 11017).